The following is a 595-amino-acid chain: Chaperone protein HscA homolog (595 aa).

The protein belongs to the heat shock protein 70 family.

Functionally, chaperone involved in the maturation of iron-sulfur cluster-containing proteins. Has a low intrinsic ATPase activity which is markedly stimulated by HscB. The protein is Chaperone protein HscA homolog of Rickettsia akari (strain Hartford).